Here is a 104-residue protein sequence, read N- to C-terminus: Large ribosomal subunit protein uL24 (104 aa).

The protein belongs to the universal ribosomal protein uL24 family. As to quaternary structure, part of the 50S ribosomal subunit.

In terms of biological role, one of two assembly initiator proteins, it binds directly to the 5'-end of the 23S rRNA, where it nucleates assembly of the 50S subunit. Functionally, one of the proteins that surrounds the polypeptide exit tunnel on the outside of the subunit. The protein is Large ribosomal subunit protein uL24 of Pseudomonas fluorescens (strain ATCC BAA-477 / NRRL B-23932 / Pf-5).